The sequence spans 1002 residues: E3 ubiquitin-protein ligase BRE1B (1002 aa).

The disordered stretch occupies residues 1–32 (MSGLSNKRAAGDGGSGPPEKKLNREEKTTTTL). Positions 18 to 28 (PEKKLNREEKT) are enriched in basic and acidic residues. Lys20 is modified (N6-acetyllysine). The residue at position 42 (Ser42) is a Phosphoserine. Residues 55–91 (KNKKLAERLEQRQACEDELRERIEKLEKRQATDDATL) adopt a coiled-coil conformation. Residues 120-148 (SSGTEVPGCQEGLTRDVIPRTDPGTSDLR) are disordered. Coiled coils occupy residues 190–378 (KAAV…LRSL) and 438–526 (LQKK…ASGS). N6-acetyllysine is present on residues Lys356 and Lys518. 2 disordered regions span residues 520–562 (RAQA…PDSK) and 579–652 (KKEE…ESEL). Residues Lys579 and Lys580 each participate in a glycyl lysine isopeptide (Lys-Gly) (interchain with G-Cter in SUMO2) cross-link. 2 positions are modified to phosphoserine: Ser585 and Ser586. Composition is skewed to basic and acidic residues over residues 603-620 (RGREPEARPKRELREREG) and 634-652 (RADREKAKAEEARRKESEL). The stretch at 628 to 947 (AASTLSRADR…EEIKEYKARL (320 aa)) forms a coiled coil. Residues 949–988 (CPCCNTRKKDAVLTKCFHVFCFECVRGRYEARQRKCPKCN) form an RING-type zinc finger.

This sequence belongs to the BRE1 family. As to quaternary structure, component of the RNF20/40 complex (also known as BRE1 complex) probably composed of 2 copies of RNF20/BRE1A and 2 copies of RNF40/BRE1B. Interacts with UBE2E1/UBCH6. Interacts with RB1 and WAC. May interact with STX1A. Ubiquitously expressed. Expressed in brain, testis, heart, liver and kidney. Weakly expressed in lung, spleen and skeletal muscle (at protein level).

Its subcellular location is the nucleus. The enzyme catalyses S-ubiquitinyl-[E2 ubiquitin-conjugating enzyme]-L-cysteine + [acceptor protein]-L-lysine = [E2 ubiquitin-conjugating enzyme]-L-cysteine + N(6)-ubiquitinyl-[acceptor protein]-L-lysine.. Its pathway is protein modification; protein ubiquitination. In terms of biological role, component of the RNF20/40 E3 ubiquitin-protein ligase complex that mediates monoubiquitination of 'Lys-120' of histone H2B (H2BK120ub1). H2BK120ub1 gives a specific tag for epigenetic transcriptional activation and is also prerequisite for histone H3 'Lys-4' and 'Lys-79' methylation (H3K4me and H3K79me, respectively). It thereby plays a central role in histone code and gene regulation. The RNF20/40 complex forms a H2B ubiquitin ligase complex in cooperation with the E2 enzyme UBE2A or UBE2B; reports about the cooperation with UBE2E1/UBCH are contradictory. Required for transcriptional activation of Hox genes. The chain is E3 ubiquitin-protein ligase BRE1B (Rnf40) from Rattus norvegicus (Rat).